Here is a 248-residue protein sequence, read N- to C-terminus: Ribosomal RNA small subunit methyltransferase J (248 aa).

S-adenosyl-L-methionine contacts are provided by residues 98-99 (RD), 114-115 (ER), 150-151 (SS), and D168.

This sequence belongs to the methyltransferase superfamily. RsmJ family.

It is found in the cytoplasm. It catalyses the reaction guanosine(1516) in 16S rRNA + S-adenosyl-L-methionine = N(2)-methylguanosine(1516) in 16S rRNA + S-adenosyl-L-homocysteine + H(+). In terms of biological role, specifically methylates the guanosine in position 1516 of 16S rRNA. This is Ribosomal RNA small subunit methyltransferase J from Shewanella baltica (strain OS195).